The following is a 275-amino-acid chain: LIM/homeobox protein Awh (275 aa).

LIM zinc-binding domains are found at residues 6–67 and 68–129; these read RSCA…NFGA and KCSK…TVEG. Residue T126 is modified to Phosphothreonine. The homeobox DNA-binding region spans 148 to 207; that stretch reads TKRVRTTFTEEQLQVLQANFQIDSNPDGQDLERIASVTGLSKRVTQVWFQNSRARQKKHI. The segment at 253 to 275 is disordered; it reads PTHESSMDELSQDSSVHCMPSEV.

In terms of tissue distribution, first detected in neuroblasts in stage 9 embryos. Expressed in all 10 abdominal segments and in the labial segment during early embryogenesis. Expressed in the stage 14 developing epithelium. By embryonic stage 16, expression is refined to the abdominal histoblasts and salivary gland imaginal ring cells. Expressed in both larval and imaginal cells between the salivary gland and the salivary gland imaginal ring, in late third instar larvae. Also expressed in specific areas of the larval wing, leg and eye-antennal disks.

The protein resides in the nucleus. In terms of biological role, probable transcription factor. Required for the establishment of a subset of imaginal tissues: the abdominal histoblasts and the salivary gland imaginal rings. The polypeptide is LIM/homeobox protein Awh (Drosophila melanogaster (Fruit fly)).